Consider the following 583-residue polypeptide: Sphingomyelin phosphodiesterase A (583 aa).

A signal peptide spans M1 to S21. The Saposin B-type domain maps to I51–G133. Cystine bridges form between C55/C129, C58/C123, and C86/C97. Residue N72 is glycosylated (N-linked (GlcNAc...) asparagine). The N-linked (GlcNAc...) asparagine glycan is linked to N182. Zn(2+) contacts are provided by D193 and H195. A disulfide bridge connects residues C214 and C229. Zn(2+) is bound by residues D258 and N298. N-linked (GlcNAc...) asparagine glycosylation is present at N377. Residues H401, H436, and H438 each contribute to the Zn(2+) site. N-linked (GlcNAc...) asparagine glycans are attached at residues N495, N500, N537, and N547. Residues C567 and C580 are joined by a disulfide bond.

Belongs to the acid sphingomyelinase family. Requires Zn(2+) as cofactor.

Its subcellular location is the secreted. In terms of biological role, converts sphingomyelin to ceramide. The protein is Sphingomyelin phosphodiesterase A (sgmA) of Dictyostelium discoideum (Social amoeba).